The chain runs to 169 residues: EP300-interacting inhibitor of differentiation 1 (169 aa).

The segment at 31 to 50 (GRGARGPAPEEGPMEEEAGP) is disordered. The interaction with NR0B2 stretch occupies residues 54 to 120 (RAQRGLFPEA…AGDALDGGFQ (67 aa)). Positions 150–154 (LGCDE) match the LXCXE motif motif.

In terms of assembly, interacts via its LXCXE motif with the entire pocket region of RB1. Interacts with EP300, NR0B2 and TRIM27. Expressed in all adult tissues examined and during embryogenesis.

It is found in the nucleus. The protein resides in the cytoplasm. Its function is as follows. Interacts with RB1 and EP300 and acts as a repressor of MYOD1 transactivation. Inhibits EP300 and CBP histone acetyltransferase activity. May be involved in coupling cell cycle exit to the transcriptional activation of genes required for cellular differentiation. May act as a candidate coinhibitory factor for NR0B2 that can be directly linked to transcription inhibitory mechanisms. This Mus musculus (Mouse) protein is EP300-interacting inhibitor of differentiation 1.